The sequence spans 446 residues: Exodeoxyribonuclease 7 large subunit (446 aa).

The protein belongs to the XseA family. As to quaternary structure, heterooligomer composed of large and small subunits.

The protein localises to the cytoplasm. The catalysed reaction is Exonucleolytic cleavage in either 5'- to 3'- or 3'- to 5'-direction to yield nucleoside 5'-phosphates.. Its function is as follows. Bidirectionally degrades single-stranded DNA into large acid-insoluble oligonucleotides, which are then degraded further into small acid-soluble oligonucleotides. The protein is Exodeoxyribonuclease 7 large subunit of Streptococcus pneumoniae (strain ATCC 700669 / Spain 23F-1).